Reading from the N-terminus, the 194-residue chain is MYLDQIKAELVEAQDVLNKFISDENNIKLIQEAALLISNSFKQGGKVLSCGNGGSHCDAMHFAEELTGRYRENRPGYPAIAISDASHLSCVSNDFGYEYVFSRYVEAVGQKGDVLFGLSTSGNSKNILNAIEAAKTKGMKVIAMTGKDGGKMAGLADVEIRVPHFRYADRIQEIHIKVIHILMMLIEFEMAKQA.

Residues 37 to 194 (ISNSFKQGGK…LIEFEMAKQA (158 aa)) form the SIS domain. 52–54 (NGG) contributes to the substrate binding site. His-61 and Glu-65 together coordinate Zn(2+). Substrate is bound by residues Glu-65, 93–94 (ND), 119–121 (STS), Ser-124, and Gln-172. Residues Gln-172 and His-180 each contribute to the Zn(2+) site.

Belongs to the SIS family. GmhA subfamily. In terms of assembly, homotetramer. It depends on Zn(2+) as a cofactor.

It is found in the cytoplasm. The catalysed reaction is 2 D-sedoheptulose 7-phosphate = D-glycero-alpha-D-manno-heptose 7-phosphate + D-glycero-beta-D-manno-heptose 7-phosphate. Its pathway is carbohydrate biosynthesis; D-glycero-D-manno-heptose 7-phosphate biosynthesis; D-glycero-alpha-D-manno-heptose 7-phosphate and D-glycero-beta-D-manno-heptose 7-phosphate from sedoheptulose 7-phosphate: step 1/1. Functionally, catalyzes the isomerization of sedoheptulose 7-phosphate in D-glycero-D-manno-heptose 7-phosphate. This Haemophilus influenzae (strain 86-028NP) protein is Phosphoheptose isomerase.